Consider the following 565-residue polypeptide: MLTGSSGKAFILSILQASPSARDSRSYLSSFAPPQPVDIATATPAATPSDGAQPPAQNPLVNALLNPILRRPALVKIQGPFTDAQLESICRGMAHLQKLGLVSVIVVDRDDLPSTESSDRYEAQRQRAIVRHEVERVVHFLSRHRAAARPVFSTVARIADPELEPEEAQKGVFVEEEGLDHVRRAVGEGEIPVLLPVALDSGCRSRRIPANRVLLALASAMSTHTSSPVDLTPRRLLVINREGGIPSYARQGLPHLYINLASEFSYINRTFQPQWNDSHPTALSNLFLANGCLAHMPREASALIVSHRSPAALIANLITNKPAHSASLPHALLVESEGRITRDTPTLIRKGLPVRVLRSMEEVDQDKLTHLLETSFKRTLDREGFYNRLKNDLDFVIVIGDYAGAAVCTLEGKPVSDSFAYPPNHPEPICYLDKFAVHPSHQGDGTVDFLWVALRDETYGLGQLDASNPSIGSLRGVGRGRDLVWRSRSDNPVNKWYYERSSGFLKTRDEKWKVFWCDAEQRLGEIWREREFGGGRLVRVVEKEEKGRVKWWEEVIGAIPSAWSA.

The tract at residues 38 to 58 (DIATATPAATPSDGAQPPAQN) is disordered. The 189-residue stretch at 352–540 (LPVRVLRSME…EFGGGRLVRV (189 aa)) folds into the N-acetyltransferase domain.

This sequence belongs to the acetyltransferase family.

It localises to the mitochondrion. The catalysed reaction is L-glutamate + acetyl-CoA = N-acetyl-L-glutamate + CoA + H(+). It participates in amino-acid biosynthesis; L-arginine biosynthesis; N(2)-acetyl-L-ornithine from L-glutamate: step 1/4. N-acetylglutamate synthase involved in arginine biosynthesis. The chain is Amino-acid acetyltransferase, mitochondrial (ARG2) from Cryptococcus neoformans var. neoformans serotype D (strain B-3501A) (Filobasidiella neoformans).